Reading from the N-terminus, the 217-residue chain is Adenylate kinase (217 aa).

10-15 is a binding site for ATP; sequence GAGKGT. The interval 30–59 is NMP; sequence STGDMLRAAVKAGTPLGIEAKKVMDAGGLV. Residues Thr-31, Arg-36, 57–59, 85–88, and Gln-92 contribute to the AMP site; these read GLV and GFPR. The interval 122-159 is LID; it reads GRRAHLASGRTYHVKYNPPKVEGKDDVTGEDLVQRDDD. ATP-binding positions include Arg-123 and 132–133; that span reads TY. AMP contacts are provided by Arg-156 and Arg-167. Gly-203 contacts ATP.

Belongs to the adenylate kinase family. Monomer.

The protein resides in the cytoplasm. The catalysed reaction is AMP + ATP = 2 ADP. It participates in purine metabolism; AMP biosynthesis via salvage pathway; AMP from ADP: step 1/1. Functionally, catalyzes the reversible transfer of the terminal phosphate group between ATP and AMP. Plays an important role in cellular energy homeostasis and in adenine nucleotide metabolism. This is Adenylate kinase from Azoarcus sp. (strain BH72).